Reading from the N-terminus, the 189-residue chain is Potassium-transporting ATPase KdpC subunit (189 aa).

A helical membrane pass occupies residues 6-26; it reads PAILFFIVFTILCGGVYPAVV.

The protein belongs to the KdpC family. In terms of assembly, the system is composed of three essential subunits: KdpA, KdpB and KdpC.

The protein resides in the cell inner membrane. Functionally, part of the high-affinity ATP-driven potassium transport (or Kdp) system, which catalyzes the hydrolysis of ATP coupled with the electrogenic transport of potassium into the cytoplasm. This subunit acts as a catalytic chaperone that increases the ATP-binding affinity of the ATP-hydrolyzing subunit KdpB by the formation of a transient KdpB/KdpC/ATP ternary complex. The sequence is that of Potassium-transporting ATPase KdpC subunit from Geotalea uraniireducens (strain Rf4) (Geobacter uraniireducens).